A 210-amino-acid polypeptide reads, in one-letter code: FMN-dependent NADH:quinone oxidoreductase (210 aa).

FMN is bound by residues 17–19 (SCS) and 148–151 (SSGG).

The protein belongs to the azoreductase type 1 family. In terms of assembly, homodimer. FMN serves as cofactor.

The catalysed reaction is 2 a quinone + NADH + H(+) = 2 a 1,4-benzosemiquinone + NAD(+). It carries out the reaction N,N-dimethyl-1,4-phenylenediamine + anthranilate + 2 NAD(+) = 2-(4-dimethylaminophenyl)diazenylbenzoate + 2 NADH + 2 H(+). Quinone reductase that provides resistance to thiol-specific stress caused by electrophilic quinones. Its function is as follows. Also exhibits azoreductase activity. Catalyzes the reductive cleavage of the azo bond in aromatic azo compounds to the corresponding amines. The chain is FMN-dependent NADH:quinone oxidoreductase from Geotalea uraniireducens (strain Rf4) (Geobacter uraniireducens).